The following is a 1451-amino-acid chain: ARF guanine-nucleotide exchange factor GNOM (1451 aa).

A DCB domain region spans residues 1-246 (MGRLKLHSGI…VNRAGSIKQE (246 aa)). The SEC7 domain maps to 557–752 (RRKYIKRRLM…NEIRTTPEQG (196 aa)). The active site involves Glu-658. A disordered region spans residues 1430-1451 (SQLGDDETVSNGLSSPENTTGS).

Homodimer. Interacts with CYP19-4/CYP5 in vitro. Stems, leaves, flowers, siliques, floral inflorescence and roots. Expressed in the whole plant (at the protein level).

Its subcellular location is the cytoplasm. It localises to the cytosol. The protein localises to the endosome membrane. It is found in the cell membrane. Inhibited by brefeldin A (BFA). Activates the ARF proteins by exchanging bound GDP for free GTP. Plays a role in vesicular protein sorting. Acts as the major regulator of endosomal vesicle trafficking but is also involved in the endocytosis process. Could function redundantly with GNL1 in the retrograde Golgi to endoplasmic reticulum trafficking. Regulates vesicle trafficking required for the coordinated polar localization of auxin efflux carriers which in turn determines the direction of auxin flow. Mediates the sorting of PIN1 from endosomal compartments to the basal plasma membrane and the polarization of PIN3 to the bottom side of hypocotyl endodermal cells. Involved in the specification of apical-basal pattern formation in the early embryo and during root formation. Required for correct cell wall organization leading to normal cell adhesion during seedling development. Also plays an essential role in hydrotropism of seedling roots. The protein is ARF guanine-nucleotide exchange factor GNOM (GN) of Arabidopsis thaliana (Mouse-ear cress).